The following is a 422-amino-acid chain: Adenylosuccinate synthetase (422 aa).

Residues 11-17 (GDEGKGK) and 39-41 (GHT) contribute to the GTP site. Asp-12 acts as the Proton acceptor in catalysis. The Mg(2+) site is built by Asp-12 and Gly-39. Residues 12 to 15 (DEGK), 37 to 40 (NAGH), Thr-129, Arg-143, Asn-219, Thr-234, and Arg-298 each bind IMP. The Proton donor role is filled by His-40. 294-300 (VTTGRKR) provides a ligand contact to substrate. GTP contacts are provided by residues Arg-300, 326–328 (KLD), and 411–413 (GTG).

Belongs to the adenylosuccinate synthetase family. Homodimer. Requires Mg(2+) as cofactor.

It is found in the cytoplasm. The catalysed reaction is IMP + L-aspartate + GTP = N(6)-(1,2-dicarboxyethyl)-AMP + GDP + phosphate + 2 H(+). Its pathway is purine metabolism; AMP biosynthesis via de novo pathway; AMP from IMP: step 1/2. Its function is as follows. Plays an important role in the de novo pathway and in the salvage pathway of purine nucleotide biosynthesis. Catalyzes the first committed step in the biosynthesis of AMP from IMP. The protein is Adenylosuccinate synthetase of Talaromyces stipitatus (strain ATCC 10500 / CBS 375.48 / QM 6759 / NRRL 1006) (Penicillium stipitatum).